Reading from the N-terminus, the 537-residue chain is Tyrosine-protein phosphatase CDC14 homolog (537 aa).

The 164-residue stretch at 182–345 folds into the Tyrosine-protein phosphatase domain; that stretch reads DFNWISPKFI…QVHFRAYFYE (164 aa). Cys286 serves as the catalytic Phosphocysteine intermediate. The segment at 359-537 is disordered; that stretch reads EPLATPPRHP…PKPSKSRLIS (179 aa). Residues 370-382 are compositionally biased toward polar residues; sequence NATNGTSQSNIST. Low complexity predominate over residues 400–411; the sequence is PPSARRLPSASS. Polar residues predominate over residues 421-437; that stretch reads ASKQSIQNENKASYSSY. At Thr453 the chain carries Phosphothreonine. Phosphoserine is present on residues Ser468 and Ser470. A compositionally biased stretch (low complexity) spans 490-502; the sequence is RRTSGNRWSSGSS. Ser513 is modified (phosphoserine). Polar residues predominate over residues 514–523; it reads MSSLNNTSNG. Basic residues predominate over residues 526–537; it reads AKPKPSKSRLIS.

This sequence belongs to the protein-tyrosine phosphatase family. Non-receptor class CDC14 subfamily. Interacts with ark1 at the kinetochores. Interacts with bir1, cdc25, mid1, nbl1, pic1, and rad24. Phosphorylated by cds1, chk1, pmk1, and cdc2 upon Hydroxylurea and H(2)O(2) stress treatment. Phosphorylation regulates the nucleolar-to-nucleoplasmic transition. Is able to autodephosphorylate.

Its subcellular location is the nucleus. The protein resides in the nucleolus. The protein localises to the cytoplasm. It localises to the cytoskeleton. It is found in the microtubule organizing center. Its subcellular location is the spindle pole body. The catalysed reaction is O-phospho-L-tyrosyl-[protein] + H2O = L-tyrosyl-[protein] + phosphate. In terms of biological role, protein phosphatase which antagonizes mitotic cyclin-dependent kinase cdc2, the inactivation of which is essential for exit from mitosis. To access its substrates, is released from nucleolar sequestration during mitosis. Plays an essential in coordinating the nuclear division cycle with cytokinesis through the cytokinesis checkpoint. Involved in chromosome segregation, where it is required for meiosis I spindle dissambly as well as for establishing two consecutive chromosome segregation phases. Allows damaged actomyosin rings to be maintained to facilitate completion of cell division in response to minor perturbation of the cell division machinery. Dephosphorylates the mitotic inducer cdc25 for its rapid degradation. Down-regulation of cdc25 activity ensures a prompt inactivation of mitotic cdc2 complexes to trigger cell division. Also dephosphorylates cdc2-phosphorylated nsk1, allowing nsk1-binding to kinetochores and spindle. Dephosphorylates ase1, which is essential for spindle midzone assembly and for continuous extension of the anaphase spindle. Tethered to the contractile ring by mid1, where it dephosphorylates cdc15. This chain is Tyrosine-protein phosphatase CDC14 homolog (clp1), found in Schizosaccharomyces pombe (strain 972 / ATCC 24843) (Fission yeast).